The following is a 406-amino-acid chain: Cysteine desulfurase (406 aa).

Residue K226 is modified to N6-(pyridoxal phosphate)lysine. The active-site Cysteine persulfide intermediate is the C364.

It belongs to the class-V pyridoxal-phosphate-dependent aminotransferase family. Csd subfamily. In terms of assembly, homodimer. Interacts with SufE and the SufBCD complex composed of SufB, SufC and SufD. The interaction with SufE is required to mediate the direct transfer of the sulfur atom from the S-sulfanylcysteine. The cofactor is pyridoxal 5'-phosphate.

The protein resides in the cytoplasm. The enzyme catalyses (sulfur carrier)-H + L-cysteine = (sulfur carrier)-SH + L-alanine. It catalyses the reaction L-selenocysteine + AH2 = hydrogenselenide + L-alanine + A + H(+). It participates in cofactor biosynthesis; iron-sulfur cluster biosynthesis. Functionally, cysteine desulfurases mobilize the sulfur from L-cysteine to yield L-alanine, an essential step in sulfur metabolism for biosynthesis of a variety of sulfur-containing biomolecules. Component of the suf operon, which is activated and required under specific conditions such as oxidative stress and iron limitation. Acts as a potent selenocysteine lyase in vitro, that mobilizes selenium from L-selenocysteine. Selenocysteine lyase activity is however unsure in vivo. This chain is Cysteine desulfurase, found in Shigella sonnei (strain Ss046).